The sequence spans 339 residues: Paired box protein Pax-9 (339 aa).

The segment at residues 2 to 128 (AFGEVNQLGG…SSISRILRNK (127 aa)) is a DNA-binding region (paired). Residues 5–61 (EVNQLGGVFVNGRPLPNAIRLRIVELAQLGIRPCDISRQLRVSHGCVSKILARYNET) form a PAI subdomain region. The segment at 80-128 (TVVKHIRTYKQRDPGIFAWEIRDRLLADGVCDKYNVPSVSSISRILRNK) is RED subdomain.

The protein resides in the nucleus. In Gallus gallus (Chicken), this protein is Paired box protein Pax-9 (PAX9).